The following is a 158-amino-acid chain: MSVFLGTHQNRLDAKGRVSIPAGFRTALRAQAAAGEALVILRPSHQYPCIEAWPTAAFAALSQPLDRLDMFSDEHDDMAAALYADAYPVDADREGRIILPDTLKEHAALTDSVAFMGLGRTFQIWEPAAAERRRAEARTRSRQLALPAQGRRQGGADA.

2 consecutive SpoVT-AbrB domains span residues 7–57 (THQN…PTAA) and 86–129 (AYPV…EPAA). Residues 133 to 158 (RRAEARTRSRQLALPAQGRRQGGADA) are disordered.

The protein belongs to the MraZ family. As to quaternary structure, forms oligomers.

Its subcellular location is the cytoplasm. It localises to the nucleoid. The chain is Transcriptional regulator MraZ from Gluconacetobacter diazotrophicus (strain ATCC 49037 / DSM 5601 / CCUG 37298 / CIP 103539 / LMG 7603 / PAl5).